Consider the following 543-residue polypeptide: Splicing factor U2af large subunit B (543 aa).

Gly residues predominate over residues 1-10; sequence MADDNGGGGD. The segment at 1–171 is disordered; sequence MADDNGGGGD…IPTPSQLPGS (171 aa). Composition is skewed to basic and acidic residues over residues 17 to 78 and 88 to 114; these read VRPE…DRDR and EHRDRPDDHDRHRSRDSERRRDRERDG. Residues 115 to 126 are compositionally biased toward basic residues; it reads HRRHRSRSRSRS. RRM domains are found at residues 207 to 290, 327 to 405, and 446 to 532; these read RRVY…RPTD, DRIF…RANQ, and QVVT…YPEN.

The protein belongs to the splicing factor SR family.

It is found in the nucleus. Necessary for the splicing of pre-mRNA. In Triticum aestivum (Wheat), this protein is Splicing factor U2af large subunit B (U2AF65B).